Here is a 620-residue protein sequence, read N- to C-terminus: Two-component response regulator ORR27 (620 aa).

Residues 24-138 enclose the Response regulatory domain; the sequence is HVLVVDDDAA…AIKFIWKHVL (115 aa). A 4-aspartylphosphate modification is found at Asp-76. 2 disordered regions span residues 171–197 and 215–257; these read PPAV…AELS and VWSS…LEAT. Positions 261-321 form a DNA-binding region, myb-like GARP; it reads KKVRTRFTWT…HLQKYRSWLE (61 aa). Residues 431–456 are compositionally biased toward polar residues; sequence SVSRDAHENGNSQARGSAMSNGTSGT. Disordered stretches follow at residues 431 to 457, 501 to 523, and 596 to 620; these read SVSR…SGTR, SDQN…NSKT, and PPRG…SSGP. Residues 603–620 are compositionally biased toward polar residues; that stretch reads EIASHENTNGKNGASSGP.

It belongs to the ARR family. Type-B subfamily. Two-component system major event consists of a His-to-Asp phosphorelay between a sensor histidine kinase (HK) and a response regulator (RR). In plants, the His-to-Asp phosphorelay involves an additional intermediate named Histidine-containing phosphotransfer protein (HPt). This multistep phosphorelay consists of a His-Asp-His-Asp sequential transfer of a phosphate group between first a His and an Asp of the HK protein, followed by the transfer to a conserved His of the HPt protein and finally the transfer to an Asp in the receiver domain of the RR protein.

It localises to the nucleus. In terms of biological role, transcriptional activator that binds specific DNA sequence. Functions as a response regulator involved in His-to-Asp phosphorelay signal transduction system. Phosphorylation of the Asp residue in the receiver domain activates the ability of the protein to promote the transcription of target genes. May directly activate some type-A response regulators in response to cytokinins. The polypeptide is Two-component response regulator ORR27 (Oryza sativa subsp. japonica (Rice)).